We begin with the raw amino-acid sequence, 78 residues long: Cytochrome c oxidase subunit 6b-3 (78 aa).

In terms of domain architecture, CHCH spans 22–65 (TRHCFTRYIEFHRCTTAKGEDANECERFAKYYRALCPGEWVDKW). The short motif at 25-35 (CFTRYIEFHRC) is the Cx9C motif element. Disulfide bonds link Cys25–Cys57 and Cys35–Cys46. The Cx10C motif signature appears at 46–57 (CERFAKYYRALC).

The protein belongs to the cytochrome c oxidase subunit 6B (TC 3.D.4.8) family. In terms of tissue distribution, expressed in the whole plant.

The protein resides in the mitochondrion. Its function is as follows. This protein is one of the nuclear-coded polypeptide chains of cytochrome c oxidase, the terminal oxidase in mitochondrial electron transport. This protein may be one of the heme-binding subunits of the oxidase. The chain is Cytochrome c oxidase subunit 6b-3 (COX6B-3) from Arabidopsis thaliana (Mouse-ear cress).